Consider the following 172-residue polypeptide: 3-hydroxydecanoyl-[acyl-carrier-protein] dehydratase (172 aa).

Residue histidine 70 is part of the active site.

The protein belongs to the thioester dehydratase family. FabA subfamily. In terms of assembly, homodimer.

It localises to the cytoplasm. The enzyme catalyses a (3R)-hydroxyacyl-[ACP] = a (2E)-enoyl-[ACP] + H2O. It carries out the reaction (3R)-hydroxydecanoyl-[ACP] = (2E)-decenoyl-[ACP] + H2O. It catalyses the reaction (2E)-decenoyl-[ACP] = (3Z)-decenoyl-[ACP]. Its pathway is lipid metabolism; fatty acid biosynthesis. Its function is as follows. Necessary for the introduction of cis unsaturation into fatty acids. Catalyzes the dehydration of (3R)-3-hydroxydecanoyl-ACP to E-(2)-decenoyl-ACP and then its isomerization to Z-(3)-decenoyl-ACP. Can catalyze the dehydratase reaction for beta-hydroxyacyl-ACPs with saturated chain lengths up to 16:0, being most active on intermediate chain length. The polypeptide is 3-hydroxydecanoyl-[acyl-carrier-protein] dehydratase (fabA) (Xylella fastidiosa (strain 9a5c)).